Here is a 159-residue protein sequence, read N- to C-terminus: Nucleotide-binding protein PSPPH_4093 (159 aa).

The protein belongs to the YajQ family.

Its function is as follows. Nucleotide-binding protein. This Pseudomonas savastanoi pv. phaseolicola (strain 1448A / Race 6) (Pseudomonas syringae pv. phaseolicola (strain 1448A / Race 6)) protein is Nucleotide-binding protein PSPPH_4093.